The following is a 137-amino-acid chain: Protein shisa-5 (137 aa).

A helical transmembrane segment spans residues 3-23 (FGATLAVGLTIFVLSVVTIII).

It belongs to the shisa family. Interacts with PDCD6; PDCD6 can stabilize SHISA5.

The protein resides in the endoplasmic reticulum membrane. It is found in the nucleus membrane. Its function is as follows. Can induce apoptosis in a caspase-dependent manner and plays a role in p53/TP53-dependent apoptosis. This is Protein shisa-5 (SHISA5) from Pongo abelii (Sumatran orangutan).